The primary structure comprises 384 residues: Galactokinase (384 aa).

Glu-34–Asp-37 provides a ligand contact to substrate. Position 123-129 (Ser-123–Ser-129) interacts with ATP. 2 residues coordinate Mg(2+): Ser-129 and Glu-161. Asp-173 (proton acceptor) is an active-site residue. Tyr-222 contacts substrate.

It belongs to the GHMP kinase family. GalK subfamily.

Its subcellular location is the cytoplasm. It carries out the reaction alpha-D-galactose + ATP = alpha-D-galactose 1-phosphate + ADP + H(+). The protein operates within carbohydrate metabolism; galactose metabolism. Functionally, catalyzes the transfer of the gamma-phosphate of ATP to D-galactose to form alpha-D-galactose-1-phosphate (Gal-1-P). This Actinobacillus pleuropneumoniae serotype 5b (strain L20) protein is Galactokinase.